Consider the following 361-residue polypeptide: Molybdenum import ATP-binding protein ModC (361 aa).

Residues 1 to 228 (MLNINIEKQF…EQMRPWVPLQ (228 aa)) enclose the ABC transporter domain. 31–38 (GRSGAGKT) is a binding site for ATP. In terms of domain architecture, Mop spans 289–356 (GSSIRNLLRG…IKGVTMTQMD (68 aa)).

Belongs to the ABC transporter superfamily. Molybdate importer (TC 3.A.1.8) family. The complex is composed of two ATP-binding proteins (ModC), two transmembrane proteins (ModB) and a solute-binding protein (ModA).

The protein resides in the cell inner membrane. It catalyses the reaction molybdate(out) + ATP + H2O = molybdate(in) + ADP + phosphate + H(+). Part of the ABC transporter complex ModABC involved in molybdenum import. Responsible for energy coupling to the transport system. This chain is Molybdenum import ATP-binding protein ModC, found in Shewanella sp. (strain MR-4).